Reading from the N-terminus, the 332-residue chain is MISFSSFYQQIADSNLQHWLETLPSILGKWQRDHKHGNLPKWEKVLNKLHYPAPDQVDFVDSVTVGSGEQLSPGEKEKLENLLRLFMPWRKGPFHIHGIHIDTEWRSDWKWDRVKQHISPLNNRTVLDVGCGSGYHMWRMLGAGAKRVVGIDPSPLFLCQFEAVKRLAGAHHPVHLLPLGIEELPPLDAFDTVFSMGVLYHRRSPIDHLLQLRDQLRTGGELVLETLVIDGDENAVLVPQDRYGKMNNVWFIPSVAALMLWLKKCDFTDIRCVDTDVTALAEQRRTDWMPNESLLEYLDPTDITKTIEGYPAPKRATIIAIKNQPNQETVNG.

Residues Lys91, Trp105, Lys110, Gly130, 152–154, 181–182, Met196, Tyr200, and Arg315 each bind carboxy-S-adenosyl-L-methionine; these read DPS and IE.

Belongs to the class I-like SAM-binding methyltransferase superfamily. CmoB family. As to quaternary structure, homotetramer.

It carries out the reaction carboxy-S-adenosyl-L-methionine + 5-hydroxyuridine(34) in tRNA = 5-carboxymethoxyuridine(34) in tRNA + S-adenosyl-L-homocysteine + H(+). In terms of biological role, catalyzes carboxymethyl transfer from carboxy-S-adenosyl-L-methionine (Cx-SAM) to 5-hydroxyuridine (ho5U) to form 5-carboxymethoxyuridine (cmo5U) at position 34 in tRNAs. The polypeptide is tRNA U34 carboxymethyltransferase (Shewanella sp. (strain W3-18-1)).